Here is a 642-residue protein sequence, read N- to C-terminus: MFNKNNNNNKIIIILKLFLIILIVNNNNNIKTFGLNLPDGYGAGLVDPTATCSNYIGDSIDQPLCNEKLPNYKNIYTSKNITIQYINQKIVEKTFISLTFLQSKCFDLNFAEFGICDIYFPPCFQTPTTITPIKSVSLPQRLCKSACERMVSNCSSLGASLNCSDPLKFPRIATLYNLTDYGFTANGGFFPVPCSDPLATFENKSTTSELIEICPSPLLLFNSSDPKYSADRGYTYLTPTNCVLPCVAPIYTEKKWHQMYNMSKILSTISFVCSIYNVLTFGILNHRRSKYNYCITFFSASVIIITMMDIVTYGIGYEKLLCPEPGRFAVQSDVSCGATGALFHIGITNGVFWWTTMSICLFAVVKRIKLFDFRYFIIFNTTASLISVIIPLAGNAFMAGTGSLACWIRKTWYVNSVFWIPCGIALTIGSVCIILVIYEIYKITKNVSTKDNRMILLQIKPFLCVTLVGGSFYYLFIFNFDNESHSKEYKEKVVDYVMCLLSDTGKECLMAGPNYVAYFVFYFFIRLFGITFFCIYGTSQNARDIWIHSKILNHPNIKPFLLKYNIINFNSMTHYGSGTNPTSNSKNSKNNQNNQNNNSRKEFESKNIELEVNESISKGQTTRGADDEEESNINSASNTSSD.

Residues 1 to 26 (MFNKNNNNNKIIIILKLFLIILIVNN) form the signal peptide. The Extracellular segment spans residues 27 to 264 (NNNIKTFGLN…KWHQMYNMSK (238 aa)). The 151-residue stretch at 47-197 (DPTATCSNYI…GFFPVPCSDP (151 aa)) folds into the FZ domain. 3 disulfides stabilise this stretch: C52-C123, C65-C116, and C143-C194. 7 N-linked (GlcNAc...) asparagine glycosylation sites follow: N80, N153, N162, N177, N203, N222, and N261. Residues 265–285 (ILSTISFVCSIYNVLTFGILN) traverse the membrane as a helical segment. Topologically, residues 286-294 (HRRSKYNYC) are cytoplasmic. A helical membrane pass occupies residues 295–315 (ITFFSASVIIITMMDIVTYGI). The Extracellular portion of the chain corresponds to 316–344 (GYEKLLCPEPGRFAVQSDVSCGATGALFH). Residues 345–365 (IGITNGVFWWTTMSICLFAVV) traverse the membrane as a helical segment. Residues 366–375 (KRIKLFDFRY) lie on the Cytoplasmic side of the membrane. Residues 376–398 (FIIFNTTASLISVIIPLAGNAFM) form a helical membrane-spanning segment. Over 399-416 (AGTGSLACWIRKTWYVNS) the chain is Extracellular. The helical transmembrane segment at 417–437 (VFWIPCGIALTIGSVCIILVI) threads the bilayer. Residues 438-460 (YEIYKITKNVSTKDNRMILLQIK) are Cytoplasmic-facing. A helical transmembrane segment spans residues 461 to 481 (PFLCVTLVGGSFYYLFIFNFD). N-linked (GlcNAc...) asparagine glycosylation occurs at N482. The Extracellular segment spans residues 482 to 514 (NESHSKEYKEKVVDYVMCLLSDTGKECLMAGPN). A helical membrane pass occupies residues 515–535 (YVAYFVFYFFIRLFGITFFCI). At 536-642 (YGTSQNARDI…INSASNTSSD (107 aa)) the chain is on the cytoplasmic side. The disordered stretch occupies residues 578–642 (GTNPTSNSKN…INSASNTSSD (65 aa)). A compositionally biased stretch (low complexity) spans 583–598 (SNSKNSKNNQNNQNNN). The stretch at 584-611 (NSKNSKNNQNNQNNNSRKEFESKNIELE) forms a coiled coil. Basic and acidic residues predominate over residues 599–609 (SRKEFESKNIE). 2 stretches are compositionally biased toward polar residues: residues 614-623 (ESISKGQTTR) and 632-642 (NINSASNTSSD).

The protein belongs to the G-protein coupled receptor Fz/Smo family.

It is found in the membrane. The polypeptide is Frizzled and smoothened-like protein B (fslB) (Dictyostelium discoideum (Social amoeba)).